The primary structure comprises 325 residues: Pyruvate dehydrogenase E1 component subunit beta (325 aa).

E60 lines the thiamine diphosphate pocket.

In terms of assembly, heterodimer of an alpha and a beta chain. Requires thiamine diphosphate as cofactor.

It carries out the reaction N(6)-[(R)-lipoyl]-L-lysyl-[protein] + pyruvate + H(+) = N(6)-[(R)-S(8)-acetyldihydrolipoyl]-L-lysyl-[protein] + CO2. Its function is as follows. The pyruvate dehydrogenase complex catalyzes the overall conversion of pyruvate to acetyl-CoA and CO(2). It contains multiple copies of three enzymatic components: pyruvate dehydrogenase (E1), dihydrolipoamide acetyltransferase (E2) and lipoamide dehydrogenase (E3). The polypeptide is Pyruvate dehydrogenase E1 component subunit beta (pdhB) (Staphylococcus aureus (strain COL)).